Consider the following 447-residue polypeptide: NAC domain containing protein 50 (447 aa).

The tract at residues 1–21 is disordered; sequence MGRESLAVVSSPPSATAPSTA. The 152-residue stretch at 27–178 folds into the NAC domain; the sequence is LAPGFRFHPT…AYVLCRVFHK (152 aa). The DNA-binding element occupies 126–184; sequence LGMKKTLVFHSGRAPDGLRTNWVMHEYRLVEYETETNGSLLQDAYVLCRVFHKNNIGPP. Disordered stretches follow at residues 246–303 and 371–392; these read DATP…NKEA and KENQQKEETSPPSPIASPEEKV. Positions 281–293 are enriched in basic and acidic residues; sequence TLKREHAEEDERP. Residues 392–447 adopt a coiled-coil conformation; sequence VNDLQKEVHQMSVERETFKLEMMSAEAMISILQSRIDALRQENEELKKKNASGQAS.

As to quaternary structure, interacts with JMJ14 and NAC052. In terms of tissue distribution, mostly expressed in floral organs, and, at low levels, in other organs.

Its subcellular location is the nucleus. Functionally, transcriptional repressor that binds to the motif 5'-(C/T)A(C/A)G-3' in the promoter of target genes. Also binds to the 5'-CTTGNNNNNCAAG-3' consensus sequence in chromatin. Can bind to the mitochondrial dysfunction motif (MDM) present in the upstream regions of mitochondrial dysfunction stimulon (MDS) genes involved in mitochondrial retrograde regulation (MRR). Together with NAC051/NAC052 and JMJ14, regulates gene expression and flowering time by associating with the histone demethylase JMJ14, probably by the promotion of RNA-mediated gene silencing. This chain is NAC domain containing protein 50, found in Arabidopsis thaliana (Mouse-ear cress).